The primary structure comprises 89 residues: Cell division topological specificity factor (89 aa).

The protein belongs to the MinE family.

Functionally, prevents the cell division inhibition by proteins MinC and MinD at internal division sites while permitting inhibition at polar sites. This ensures cell division at the proper site by restricting the formation of a division septum at the midpoint of the long axis of the cell. This is Cell division topological specificity factor from Edwardsiella ictaluri (strain 93-146).